The chain runs to 315 residues: ATP synthase gamma chain (315 aa).

This sequence belongs to the ATPase gamma chain family. As to quaternary structure, F-type ATPases have 2 components, CF(1) - the catalytic core - and CF(0) - the membrane proton channel. CF(1) has five subunits: alpha(3), beta(3), gamma(1), delta(1), epsilon(1). CF(0) has three main subunits: a, b and c.

It is found in the cellular thylakoid membrane. Its function is as follows. Produces ATP from ADP in the presence of a proton gradient across the membrane. The gamma chain is believed to be important in regulating ATPase activity and the flow of protons through the CF(0) complex. The protein is ATP synthase gamma chain of Microcystis aeruginosa (strain NIES-843 / IAM M-2473).